Here is a 359-residue protein sequence, read N- to C-terminus: Mannose-1-phosphate guanylyltransferase catalytic subunit beta (359 aa).

Residues 2–221 form a substrate-binding domain region; sequence KALILVGGFG…EGFWMDVGQP (220 aa). Aspartate 109 provides a ligand contact to GDP-alpha-D-mannose. Aspartate 109 lines the Mg(2+) pocket. Residue lysine 161 is part of the active site. Aspartate 217 contributes to the GDP-alpha-D-mannose binding site. Position 217 (aspartate 217) interacts with Mg(2+). The interval 244 to 359 is hexapeptide repeat domain; sequence ATGNGIIGPV…SSIPEPEIIM (116 aa).

The protein belongs to the transferase hexapeptide repeat family. Component of the GMPPA-GMPPB mannose-1-phosphate guanylyltransferase complex composed of 4 GMPPA subunits and 8 gmppB subunits; the complex is organized into three layers, a central layer made up of 2 gmppA dimers sandwiched between two layers each made up of 2 gmppB dimers. gmppB catalytic activity is reduced when part of the complex and binding of GDP-alpha-D-Mannose by gmppA induces allosteric feedback inhibition of gmppB. The cofactor is Mg(2+).

It catalyses the reaction alpha-D-mannose 1-phosphate + GTP + H(+) = GDP-alpha-D-mannose + diphosphate. The protein operates within nucleotide-sugar biosynthesis; GDP-alpha-D-mannose biosynthesis; GDP-alpha-D-mannose from alpha-D-mannose 1-phosphate (GTP route): step 1/1. With respect to regulation, enzyme activity is reduced by incorporation into the GMPPA-GMPPB mannose-1-phosphate guanylyltransferase complex. Allosterically inhibited, when part of the GMPPA-GMPPB complex, by GDP-alpha-D-mannose binding to GMPPA. Catalytic subunit of the GMPPA-GMPPB mannose-1-phosphate guanylyltransferase complex. Catalyzes the formation of GDP-mannose, an essential precursor of glycan moieties of glycoproteins and glycolipids. Can catalyze the reverse reaction in vitro. Together with GMPPA regulates GDP-alpha-D-mannose levels. In Dictyostelium discoideum (Social amoeba), this protein is Mannose-1-phosphate guanylyltransferase catalytic subunit beta (gmppB).